Consider the following 631-residue polypeptide: Transmembrane and coiled-coil domain-containing protein 4 (631 aa).

Residues 1–26 (MATWNRPHPRLPVAPEPVAEGESQQP) are disordered. Residues 153–183 (EEVFLESLKDAKEEESETAEESRKRKEKRRK) adopt a coiled-coil conformation. 4 helical membrane passes run 187 to 203 (YLLI…VIGV), 204 to 220 (TGGL…ATII), 228 to 248 (LGSV…GAGL), and 343 to 363 (LSGI…ANVI). Residues 523–631 (WSEKGLPLAP…ETQESCAELD (109 aa)) form a disordered region. Residues 571-590 (IPSSASQAQVPAGLDQSTED) are compositionally biased toward polar residues.

This sequence belongs to the TMCO4 family.

The protein localises to the membrane. The sequence is that of Transmembrane and coiled-coil domain-containing protein 4 (Tmco4) from Rattus norvegicus (Rat).